Reading from the N-terminus, the 136-residue chain is Urease subunit beta (136 aa).

A disordered region spans residues 112–136 (ENDEYAGVFGDNGTENVNKKGGKRS).

The protein belongs to the urease beta subunit family. Heterotrimer of UreA (gamma), UreB (beta) and UreC (alpha) subunits. Three heterotrimers associate to form the active enzyme.

It is found in the cytoplasm. It carries out the reaction urea + 2 H2O + H(+) = hydrogencarbonate + 2 NH4(+). Its pathway is nitrogen metabolism; urea degradation; CO(2) and NH(3) from urea (urease route): step 1/1. This is Urease subunit beta from Staphylococcus aureus (strain MRSA252).